Reading from the N-terminus, the 560-residue chain is Bifunctional NAD(P)H-hydrate repair enzyme (560 aa).

Residues 1 to 241 (MLSRLSERCS…WMTAPERMRA (241 aa)) are NAD(P)H-hydrate epimerase. Positions 29 to 235 (LRDAEPAAAA…SLGLEDWMTA (207 aa)) constitute a YjeF N-terminal domain. The interval 77–81 (NNGGD) is NADPHX 1; for epimerase activity. K(+) is bound by residues Asn78 and Asp145. The NADPHX 1; for epimerase activity stretch occupies residues 149 to 155 (GTGICGP). Positions 160 and 178 each coordinate (6S)-NADPHX. Ser181 is a binding site for K(+). A YjeF C-terminal domain is found at 249–547 (LDDVYEYFGI…HRVPLIVNAS (299 aa)). Positions 249-560 (LDDVYEYFGI…PATRQRSSGP (312 aa)) are ADP-dependent (S)-NAD(P)H-hydrate dehydratase. Residue Gly351 participates in (6S)-NADPHX binding. An NADPHX 2; for dehydratase activity region spans residues 417–423 (HPGEAAR). ADP contacts are provided by residues 454–458 (KGPGT) and 475–484 (NAGMASGGMG). (6S)-NADPHX is bound at residue Asp485.

It in the N-terminal section; belongs to the NnrE/AIBP family. This sequence in the C-terminal section; belongs to the NnrD/CARKD family. The cofactor is K(+).

It carries out the reaction (6S)-NADHX + ADP = AMP + phosphate + NADH + H(+). The catalysed reaction is (6S)-NADPHX + ADP = AMP + phosphate + NADPH + H(+). It catalyses the reaction (6R)-NADHX = (6S)-NADHX. The enzyme catalyses (6R)-NADPHX = (6S)-NADPHX. Functionally, bifunctional enzyme that catalyzes the epimerization of the S- and R-forms of NAD(P)HX and the dehydration of the S-form of NAD(P)HX at the expense of ADP, which is converted to AMP. This allows the repair of both epimers of NAD(P)HX, a damaged form of NAD(P)H that is a result of enzymatic or heat-dependent hydration. This chain is Bifunctional NAD(P)H-hydrate repair enzyme, found in Leishmania infantum.